The sequence spans 379 residues: Succinyl-diaminopimelate desuccinylase (379 aa).

His-68 is a Zn(2+) binding site. The active site involves Asp-70. Asp-101 is a binding site for Zn(2+). Catalysis depends on Glu-135, which acts as the Proton acceptor. Positions 136, 164, and 350 each coordinate Zn(2+).

The protein belongs to the peptidase M20A family. DapE subfamily. In terms of assembly, homodimer. Zn(2+) is required as a cofactor. Requires Co(2+) as cofactor.

The enzyme catalyses N-succinyl-(2S,6S)-2,6-diaminopimelate + H2O = (2S,6S)-2,6-diaminopimelate + succinate. It functions in the pathway amino-acid biosynthesis; L-lysine biosynthesis via DAP pathway; LL-2,6-diaminopimelate from (S)-tetrahydrodipicolinate (succinylase route): step 3/3. Catalyzes the hydrolysis of N-succinyl-L,L-diaminopimelic acid (SDAP), forming succinate and LL-2,6-diaminopimelate (DAP), an intermediate involved in the bacterial biosynthesis of lysine and meso-diaminopimelic acid, an essential component of bacterial cell walls. The sequence is that of Succinyl-diaminopimelate desuccinylase from Bordetella parapertussis (strain 12822 / ATCC BAA-587 / NCTC 13253).